We begin with the raw amino-acid sequence, 571 residues long: PR domain zinc finger protein 14 (571 aa).

S79 carries the phosphoserine modification. The disordered stretch occupies residues 129-191; sequence LGHQIIGGDN…PKPSNQEGKS (63 aa). Positions 165–176 are enriched in polar residues; that stretch reads RTSQLLPCSPSK. The segment at 194-384 is interaction with CBFA2T2; sequence RFQFTEEDLH…DIPVSLQVTE (191 aa). In terms of domain architecture, SET spans 251–367; that stretch reads EGLCLMQTVF…QNQELLVWYG (117 aa). A C2H2-type 1; atypical zinc finger spans residues 400 to 424; it reads YRCERCGKVFTYKYYRDKHLKYTPC. 5 C2H2-type zinc fingers span residues 432–455, 461–483, 489–511, 517–540, and 546–568; these read FPCS…LHVH, HKCS…MRVH, YQCV…IRQH, FKCK…RRSH, and CSCS…MKFH.

The protein belongs to the class V-like SAM-binding methyltransferase superfamily. As to quaternary structure, interacts with CBFA2T2. In terms of tissue distribution, expressed in embryonic stem cells. Tends to be overexpressed in breast cancer (at protein level).

The protein resides in the nucleus. Its function is as follows. Transcription factor that has both positive and negative roles on transcription. Required for the maintenance of embryonic stem cell identity and the reacquisition of pluripotency in somatic cells. May play an essential role in germ cell development at 2 levels: the reacquisition of potential pluripotency, including SOX2 up-regulation, and successful epigenetic reprogramming, characterized by EHMT1 repression. Its association with CBFA2T2 is required for the functions in pluripotency and germ cell formation. Directly up-regulates the expression of pluripotency gene POU5F1 through its proximal enhancer. Binds to the DNA consensus sequence 5'-GGTC[TC]CTAA-3'. The chain is PR domain zinc finger protein 14 (PRDM14) from Homo sapiens (Human).